We begin with the raw amino-acid sequence, 452 residues long: Glycine receptor subunit alpha-2 (452 aa).

The signal sequence occupies residues 1–27 (MNRQLVNILTALFAFFLGTNHFREAFC). Residues 28 to 256 (KDHDSRSGKH…KFHLERQMGY (229 aa)) lie on the Extracellular side of the membrane. N-linked (GlcNAc...) asparagine glycosylation is present at Asn72. Arg99 is a glycine binding site. Arg99 serves as a coordination point for strychnine. N-linked (GlcNAc...) asparagine glycosylation occurs at Asn103. Ser163 is a binding site for glycine. Residues Cys172 and Cys186 are joined by a disulfide bond. Zn(2+)-binding residues include Glu226 and Glu228. A disulfide bridge links Cys232 with Cys243. Thr238 is a binding site for glycine. Position 249 (His249) interacts with Zn(2+). A helical membrane pass occupies residues 257-278 (YLIQMYIPSLLIVILSWVSFWI). Over 279-283 (NMDAA) the chain is Cytoplasmic. Residues 284 to 304 (PARVALGITTVLTMTTQSSGS) form a helical membrane-spanning segment. Topologically, residues 305–315 (RASLPKVSYVK) are extracellular. The helical transmembrane segment at 316–336 (AIDIWMAVCLLFVFAALLEYA) threads the bilayer. Residues 337–420 (AVNFVSRQHK…FVDRAKRIDT (84 aa)) lie on the Cytoplasmic side of the membrane. A helical transmembrane segment spans residues 421–441 (ISRAAFPLAFLIFNIFYWITY). Residues 442 to 452 (KIIRHEDVHKK) are Extracellular-facing.

This sequence belongs to the ligand-gated ion channel (TC 1.A.9) family. Glycine receptor (TC 1.A.9.3) subfamily. GLRA2 sub-subfamily. Interacts with GLRB. Heteropentamer composed of GLRA2 and GLRB; functional GLRB-GLRA2 heteropentamers contain four GLRA2 subunits and one GLRB subunit, although alternative subunit composition cannot be excluded. Homopentamer (in vitro). Both homopentamers and heteropentamers form functional ion channels, but their characteristics are subtly different.

The protein resides in the postsynaptic cell membrane. It localises to the synapse. It is found in the cell membrane. Its subcellular location is the cell projection. It carries out the reaction chloride(in) = chloride(out). With respect to regulation, channel opening is triggered by extracellular glycine. Channel opening is also triggered by taurine and beta-alanine. Inhibited by strychnine. Inhibited by picrotoxin. Functionally, subunit of heteromeric glycine-gated chloride channels. Plays a role in synaptic plasticity. Contributes to the generation of inhibitory postsynaptic currents, and is involved in the down-regulation of neuronal excitability. Plays a role in cellular responses to ethanol. The polypeptide is Glycine receptor subunit alpha-2 (Rattus norvegicus (Rat)).